Here is a 294-residue protein sequence, read N- to C-terminus: uncharacterized protein (294 aa).

The signal sequence occupies residues 1 to 18 (MKKLLLIITVFFTCSAVA).

This is an uncharacterized protein from Rickettsia bellii (strain RML369-C).